Consider the following 526-residue polypeptide: Trigger factor (526 aa).

The region spanning 162-243 (GDFVSIDLSA…LGSVKERELP (82 aa)) is the PPIase FKBP-type domain. Over residues 425-460 (DTDGADVDPKEYFGDVEAEGDKADKAETDKAEEKPK) the composition is skewed to basic and acidic residues. Residues 425 to 526 (DTDGADVDPK…AKKAAEKKED (102 aa)) form a disordered region. Positions 461 to 517 (KAPAKKSTTKKSTAKKSTAKKSTAKKSTAKKSTAKKSTTKKATKSTAKKSTAKKTTA) are enriched in basic residues.

It belongs to the FKBP-type PPIase family. Tig subfamily.

Its subcellular location is the cytoplasm. The catalysed reaction is [protein]-peptidylproline (omega=180) = [protein]-peptidylproline (omega=0). In terms of biological role, involved in protein export. Acts as a chaperone by maintaining the newly synthesized protein in an open conformation. Functions as a peptidyl-prolyl cis-trans isomerase. The protein is Trigger factor of Corynebacterium jeikeium (strain K411).